We begin with the raw amino-acid sequence, 296 residues long: Giardin subunit alpha-3 (296 aa).

Annexin repeat units follow at residues 3–72, 74–146, 153–222, and 226–295; these read DTVT…SNCW, ELPV…TWIK, NNIN…TAHY, and GMNN…VLWR.

This sequence belongs to the annexin family. Giardin subunit alpha subfamily.

The protein localises to the cytoplasm. It is found in the cytoskeleton. Giardins are involved in parasite attachment to the intestinal mucosa and in the cytoskeletal disassembly and reassembly that marks the transition from infectious trophozoite to transmissible cyst. They may interact with other cytoskeletal proteins such as microtubules in the microribbons or crossbridges, to maintain the integrity of the ventral disk. This Giardia intestinalis (Giardia lamblia) protein is Giardin subunit alpha-3.